The following is a 212-amino-acid chain: High frequency lysogenization protein HflD homolog (212 aa).

This sequence belongs to the HflD family.

Its subcellular location is the cytoplasm. It is found in the cell inner membrane. This Pectobacterium carotovorum subsp. carotovorum (strain PC1) protein is High frequency lysogenization protein HflD homolog.